Consider the following 337-residue polypeptide: Probable deoxyhypusine synthase (337 aa).

K308 serves as the catalytic Nucleophile.

This sequence belongs to the deoxyhypusine synthase family. NAD(+) serves as cofactor.

It catalyses the reaction [eIF5A protein]-L-lysine + spermidine = [eIF5A protein]-deoxyhypusine + propane-1,3-diamine. Its pathway is protein modification; eIF5A hypusination. Its function is as follows. Catalyzes the NAD-dependent oxidative cleavage of spermidine and the subsequent transfer of the butylamine moiety of spermidine to the epsilon-amino group of a specific lysine residue of the eIF-5A precursor protein to form the intermediate deoxyhypusine residue. This chain is Probable deoxyhypusine synthase, found in Thermococcus kodakarensis (strain ATCC BAA-918 / JCM 12380 / KOD1) (Pyrococcus kodakaraensis (strain KOD1)).